Consider the following 497-residue polypeptide: Glycerol kinase 2 (497 aa).

Threonine 13 contributes to the ADP binding site. Residues threonine 13, threonine 14, and serine 15 each coordinate ATP. Threonine 13 serves as a coordination point for sn-glycerol 3-phosphate. Residue arginine 17 coordinates ADP. 4 residues coordinate sn-glycerol 3-phosphate: arginine 83, glutamate 84, tyrosine 134, and aspartate 241. Residues arginine 83, glutamate 84, tyrosine 134, aspartate 241, and glutamine 242 each contribute to the glycerol site. ADP is bound by residues threonine 263 and glycine 305. 4 residues coordinate ATP: threonine 263, glycine 305, glutamine 309, and glycine 406. ADP is bound by residues glycine 406 and asparagine 410.

Belongs to the FGGY kinase family.

The enzyme catalyses glycerol + ATP = sn-glycerol 3-phosphate + ADP + H(+). It participates in polyol metabolism; glycerol degradation via glycerol kinase pathway; sn-glycerol 3-phosphate from glycerol: step 1/1. In terms of biological role, key enzyme in the regulation of glycerol uptake and metabolism. Catalyzes the phosphorylation of glycerol to yield sn-glycerol 3-phosphate. The chain is Glycerol kinase 2 from Sulfolobus acidocaldarius (strain ATCC 33909 / DSM 639 / JCM 8929 / NBRC 15157 / NCIMB 11770).